We begin with the raw amino-acid sequence, 284 residues long: Ribosomal RNA small subunit methyltransferase A (284 aa).

The S-adenosyl-L-methionine site is built by Asn-22, Leu-24, Gly-49, Glu-70, Asp-97, and Asn-117.

The protein belongs to the class I-like SAM-binding methyltransferase superfamily. rRNA adenine N(6)-methyltransferase family. RsmA subfamily.

It is found in the cytoplasm. The enzyme catalyses adenosine(1518)/adenosine(1519) in 16S rRNA + 4 S-adenosyl-L-methionine = N(6)-dimethyladenosine(1518)/N(6)-dimethyladenosine(1519) in 16S rRNA + 4 S-adenosyl-L-homocysteine + 4 H(+). Specifically dimethylates two adjacent adenosines (A1518 and A1519) in the loop of a conserved hairpin near the 3'-end of 16S rRNA in the 30S particle. May play a critical role in biogenesis of 30S subunits. This chain is Ribosomal RNA small subunit methyltransferase A, found in Desulforapulum autotrophicum (strain ATCC 43914 / DSM 3382 / VKM B-1955 / HRM2) (Desulfobacterium autotrophicum).